A 416-amino-acid polypeptide reads, in one-letter code: Tryptophan synthase beta chain (416 aa).

K109 is modified (N6-(pyridoxal phosphate)lysine).

This sequence belongs to the TrpB family. As to quaternary structure, tetramer of two alpha and two beta chains. Pyridoxal 5'-phosphate is required as a cofactor.

The enzyme catalyses (1S,2R)-1-C-(indol-3-yl)glycerol 3-phosphate + L-serine = D-glyceraldehyde 3-phosphate + L-tryptophan + H2O. Its pathway is amino-acid biosynthesis; L-tryptophan biosynthesis; L-tryptophan from chorismate: step 5/5. Functionally, the beta subunit is responsible for the synthesis of L-tryptophan from indole and L-serine. This chain is Tryptophan synthase beta chain, found in Synechococcus sp. (strain WH7803).